A 164-amino-acid chain; its full sequence is Crossover junction endodeoxyribonuclease RuvC (164 aa).

Active-site residues include Asp-7, Glu-67, and Asp-140. Asp-7, Glu-67, and Asp-140 together coordinate Mg(2+).

This sequence belongs to the RuvC family. In terms of assembly, homodimer which binds Holliday junction (HJ) DNA. The HJ becomes 2-fold symmetrical on binding to RuvC with unstacked arms; it has a different conformation from HJ DNA in complex with RuvA. In the full resolvosome a probable DNA-RuvA(4)-RuvB(12)-RuvC(2) complex forms which resolves the HJ. It depends on Mg(2+) as a cofactor.

It localises to the cytoplasm. It catalyses the reaction Endonucleolytic cleavage at a junction such as a reciprocal single-stranded crossover between two homologous DNA duplexes (Holliday junction).. In terms of biological role, the RuvA-RuvB-RuvC complex processes Holliday junction (HJ) DNA during genetic recombination and DNA repair. Endonuclease that resolves HJ intermediates. Cleaves cruciform DNA by making single-stranded nicks across the HJ at symmetrical positions within the homologous arms, yielding a 5'-phosphate and a 3'-hydroxyl group; requires a central core of homology in the junction. The consensus cleavage sequence is 5'-(A/T)TT(C/G)-3'. Cleavage occurs on the 3'-side of the TT dinucleotide at the point of strand exchange. HJ branch migration catalyzed by RuvA-RuvB allows RuvC to scan DNA until it finds its consensus sequence, where it cleaves and resolves the cruciform DNA. The polypeptide is Crossover junction endodeoxyribonuclease RuvC (Finegoldia magna (strain ATCC 29328 / DSM 20472 / WAL 2508) (Peptostreptococcus magnus)).